Consider the following 334-residue polypeptide: Holliday junction branch migration complex subunit RuvB (334 aa).

A large ATPase domain (RuvB-L) region spans residues 1–182; that stretch reads MNERMVDQSM…FGVHLRLEYY (182 aa). ATP-binding positions include Leu21, Arg22, Gly63, Lys66, Thr67, Thr68, 129–131, Arg172, Tyr182, and Arg219; that span reads EDF. Thr67 contacts Mg(2+). Residues 183 to 253 form a small ATPAse domain (RuvB-S) region; that stretch reads NESDLKEIII…TTKHALGLLQ (71 aa). Residues 256–334 are head domain (RuvB-H); that stretch reads QHGLDYIDHK…HFAKSNEERE (79 aa). DNA-binding residues include Arg292, Arg311, and Arg316.

It belongs to the RuvB family. Homohexamer. Forms an RuvA(8)-RuvB(12)-Holliday junction (HJ) complex. HJ DNA is sandwiched between 2 RuvA tetramers; dsDNA enters through RuvA and exits via RuvB. An RuvB hexamer assembles on each DNA strand where it exits the tetramer. Each RuvB hexamer is contacted by two RuvA subunits (via domain III) on 2 adjacent RuvB subunits; this complex drives branch migration. In the full resolvosome a probable DNA-RuvA(4)-RuvB(12)-RuvC(2) complex forms which resolves the HJ.

It localises to the cytoplasm. It catalyses the reaction ATP + H2O = ADP + phosphate + H(+). Functionally, the RuvA-RuvB-RuvC complex processes Holliday junction (HJ) DNA during genetic recombination and DNA repair, while the RuvA-RuvB complex plays an important role in the rescue of blocked DNA replication forks via replication fork reversal (RFR). RuvA specifically binds to HJ cruciform DNA, conferring on it an open structure. The RuvB hexamer acts as an ATP-dependent pump, pulling dsDNA into and through the RuvAB complex. RuvB forms 2 homohexamers on either side of HJ DNA bound by 1 or 2 RuvA tetramers; 4 subunits per hexamer contact DNA at a time. Coordinated motions by a converter formed by DNA-disengaged RuvB subunits stimulates ATP hydrolysis and nucleotide exchange. Immobilization of the converter enables RuvB to convert the ATP-contained energy into a lever motion, pulling 2 nucleotides of DNA out of the RuvA tetramer per ATP hydrolyzed, thus driving DNA branch migration. The RuvB motors rotate together with the DNA substrate, which together with the progressing nucleotide cycle form the mechanistic basis for DNA recombination by continuous HJ branch migration. Branch migration allows RuvC to scan DNA until it finds its consensus sequence, where it cleaves and resolves cruciform DNA. This is Holliday junction branch migration complex subunit RuvB from Staphylococcus aureus (strain MRSA252).